We begin with the raw amino-acid sequence, 364 residues long: Methylthioribose-1-phosphate isomerase (364 aa).

Substrate is bound by residues 53-55 (RGA), Arg90, and Gln203. Asp244 functions as the Proton donor in the catalytic mechanism. 254–255 (NK) lines the substrate pocket.

The protein belongs to the eIF-2B alpha/beta/delta subunits family. MtnA subfamily.

The catalysed reaction is 5-(methylsulfanyl)-alpha-D-ribose 1-phosphate = 5-(methylsulfanyl)-D-ribulose 1-phosphate. The protein operates within amino-acid biosynthesis; L-methionine biosynthesis via salvage pathway; L-methionine from S-methyl-5-thio-alpha-D-ribose 1-phosphate: step 1/6. In terms of biological role, catalyzes the interconversion of methylthioribose-1-phosphate (MTR-1-P) into methylthioribulose-1-phosphate (MTRu-1-P). The protein is Methylthioribose-1-phosphate isomerase of Brucella anthropi (strain ATCC 49188 / DSM 6882 / CCUG 24695 / JCM 21032 / LMG 3331 / NBRC 15819 / NCTC 12168 / Alc 37) (Ochrobactrum anthropi).